Reading from the N-terminus, the 22-residue chain is Superoxide dismutase [Cu-Zn] (22 aa).

It belongs to the Cu-Zn superoxide dismutase family. In terms of assembly, homodimer. Requires Cu cation as cofactor. Zn(2+) serves as cofactor.

It is found in the cytoplasm. The enzyme catalyses 2 superoxide + 2 H(+) = H2O2 + O2. Destroys radicals which are normally produced within the cells and which are toxic to biological systems. This Hordeum vulgare (Barley) protein is Superoxide dismutase [Cu-Zn].